We begin with the raw amino-acid sequence, 153 residues long: Aspartate carbamoyltransferase regulatory chain (153 aa).

C109, C114, C138, and C141 together coordinate Zn(2+).

The protein belongs to the PyrI family. As to quaternary structure, contains catalytic and regulatory chains. Requires Zn(2+) as cofactor.

Involved in allosteric regulation of aspartate carbamoyltransferase. In Escherichia coli (strain ATCC 8739 / DSM 1576 / NBRC 3972 / NCIMB 8545 / WDCM 00012 / Crooks), this protein is Aspartate carbamoyltransferase regulatory chain.